The chain runs to 509 residues: Bifunctional purine biosynthesis protein PurH (509 aa).

An MGS-like domain is found at Met1 to Val144.

This sequence belongs to the PurH family.

It carries out the reaction (6R)-10-formyltetrahydrofolate + 5-amino-1-(5-phospho-beta-D-ribosyl)imidazole-4-carboxamide = 5-formamido-1-(5-phospho-D-ribosyl)imidazole-4-carboxamide + (6S)-5,6,7,8-tetrahydrofolate. It catalyses the reaction IMP + H2O = 5-formamido-1-(5-phospho-D-ribosyl)imidazole-4-carboxamide. The protein operates within purine metabolism; IMP biosynthesis via de novo pathway; 5-formamido-1-(5-phospho-D-ribosyl)imidazole-4-carboxamide from 5-amino-1-(5-phospho-D-ribosyl)imidazole-4-carboxamide (10-formyl THF route): step 1/1. It participates in purine metabolism; IMP biosynthesis via de novo pathway; IMP from 5-formamido-1-(5-phospho-D-ribosyl)imidazole-4-carboxamide: step 1/1. In Listeria monocytogenes serovar 1/2a (strain ATCC BAA-679 / EGD-e), this protein is Bifunctional purine biosynthesis protein PurH.